The following is a 163-amino-acid chain: Glutathione peroxidase 2 (163 aa).

Residue Cys36 is part of the active site.

The protein belongs to the glutathione peroxidase family.

The protein resides in the cytoplasm. The enzyme catalyses 2 glutathione + H2O2 = glutathione disulfide + 2 H2O. Functionally, may constitute a glutathione peroxidase-like protective system against oxidative stresses. This is Glutathione peroxidase 2 (gpx-2) from Caenorhabditis elegans.